The primary structure comprises 508 residues: Histidine ammonia-lyase (508 aa).

The segment at residues 141-143 is a cross-link (5-imidazolinone (Ala-Gly)); sequence ASG. At Ser142 the chain carries 2,3-didehydroalanine (Ser).

The protein belongs to the PAL/histidase family. Contains an active site 4-methylidene-imidazol-5-one (MIO), which is formed autocatalytically by cyclization and dehydration of residues Ala-Ser-Gly.

It localises to the cytoplasm. It carries out the reaction L-histidine = trans-urocanate + NH4(+). It participates in amino-acid degradation; L-histidine degradation into L-glutamate; N-formimidoyl-L-glutamate from L-histidine: step 1/3. This chain is Histidine ammonia-lyase, found in Geobacillus sp. (strain WCH70).